A 261-amino-acid chain; its full sequence is Kynurenine formamidase (261 aa).

S9 is modified (phosphoserine). The short motif at 36 to 40 (HGGAW) is the HGGXW element. The active-site Nucleophile is the S110. Residues D211 and H243 contribute to the active site.

This sequence belongs to the kynurenine formamidase family. As to quaternary structure, homodimer.

The catalysed reaction is N-formyl-L-kynurenine + H2O = L-kynurenine + formate + H(+). The protein operates within amino-acid degradation; L-tryptophan degradation via kynurenine pathway; L-kynurenine from L-tryptophan: step 2/2. Functionally, catalyzes the hydrolysis of N-formyl-L-kynurenine to L-kynurenine, the second step in the kynurenine pathway of tryptophan degradation. Kynurenine may be further oxidized to nicotinic acid, NAD(H) and NADP(H). Required for elimination of toxic metabolites. The protein is Kynurenine formamidase of Saccharomyces cerevisiae (strain ATCC 204508 / S288c) (Baker's yeast).